Consider the following 511-residue polypeptide: Bifunctional purine biosynthesis protein PurH (511 aa).

The region spanning 1 to 146 (MARLALLSVS…KNFAHTTVLT (146 aa)) is the MGS-like domain.

It belongs to the PurH family.

It catalyses the reaction (6R)-10-formyltetrahydrofolate + 5-amino-1-(5-phospho-beta-D-ribosyl)imidazole-4-carboxamide = 5-formamido-1-(5-phospho-D-ribosyl)imidazole-4-carboxamide + (6S)-5,6,7,8-tetrahydrofolate. It carries out the reaction IMP + H2O = 5-formamido-1-(5-phospho-D-ribosyl)imidazole-4-carboxamide. Its pathway is purine metabolism; IMP biosynthesis via de novo pathway; 5-formamido-1-(5-phospho-D-ribosyl)imidazole-4-carboxamide from 5-amino-1-(5-phospho-D-ribosyl)imidazole-4-carboxamide (10-formyl THF route): step 1/1. The protein operates within purine metabolism; IMP biosynthesis via de novo pathway; IMP from 5-formamido-1-(5-phospho-D-ribosyl)imidazole-4-carboxamide: step 1/1. The protein is Bifunctional purine biosynthesis protein PurH of Synechocystis sp. (strain ATCC 27184 / PCC 6803 / Kazusa).